Consider the following 322-residue polypeptide: Ferrochelatase (322 aa).

Fe cation is bound by residues histidine 195 and glutamate 276.

The protein belongs to the ferrochelatase family.

It localises to the cytoplasm. It carries out the reaction heme b + 2 H(+) = protoporphyrin IX + Fe(2+). It functions in the pathway porphyrin-containing compound metabolism; protoheme biosynthesis; protoheme from protoporphyrin-IX: step 1/1. Its function is as follows. Catalyzes the ferrous insertion into protoporphyrin IX. In Edwardsiella ictaluri (strain 93-146), this protein is Ferrochelatase.